The primary structure comprises 316 residues: Serpentine receptor class gamma-8 (316 aa).

The next 7 membrane-spanning stretches (helical) occupy residues 28-48 (FVQV…LYVV), 60-80 (PFFM…IFIT), 106-126 (LYYP…IFLT), 147-167 (FSRI…NTII), 186-206 (IIPW…VVMI), 235-255 (ACAA…MKVL), and 267-287 (LVQP…MIFA).

This sequence belongs to the nematode receptor-like protein srg family.

It localises to the membrane. This is Serpentine receptor class gamma-8 (srg-8) from Caenorhabditis elegans.